The primary structure comprises 357 residues: Probable cinnamyl alcohol dehydrogenase (357 aa).

Cys47 is a binding site for Zn(2+). Ser49 is an NADP(+) binding site. Zn(2+) contacts are provided by His69, Glu70, Cys100, Cys103, Cys106, Cys114, and Cys163. NADP(+) is bound by residues Thr167, 188–193 (GLGGVG), 211–216 (SSSDKK), Thr251, Gly275, and 298–300 (SFI).

Belongs to the zinc-containing alcohol dehydrogenase family. Homodimer. The cofactor is Zn(2+).

It catalyses the reaction (E)-cinnamyl alcohol + NADP(+) = (E)-cinnamaldehyde + NADPH + H(+). The enzyme catalyses (E)-coniferol + NADP(+) = (E)-coniferaldehyde + NADPH + H(+). The catalysed reaction is (E)-sinapyl alcohol + NADP(+) = (E)-sinapaldehyde + NADPH + H(+). It carries out the reaction (E)-4-coumaroyl alcohol + NADP(+) = (E)-4-coumaraldehyde + NADPH + H(+). It catalyses the reaction (E)-caffeyl alcohol + NADP(+) = (E)-caffeyl aldehyde + NADPH + H(+). It functions in the pathway aromatic compound metabolism; phenylpropanoid biosynthesis. Functionally, involved in lignin biosynthesis. Catalyzes the final step specific for the production of lignin monomers. Catalyzes the NADPH-dependent reduction of coniferaldehyde, 5-hydroxyconiferaldehyde, sinapaldehyde, 4-coumaraldehyde and caffeyl aldehyde to their respective alcohols. The polypeptide is Probable cinnamyl alcohol dehydrogenase (Pinus taeda (Loblolly pine)).